The chain runs to 116 residues: Large ribosomal subunit protein bL17 (116 aa).

The protein belongs to the bacterial ribosomal protein bL17 family. Part of the 50S ribosomal subunit. Contacts protein L32.

In Prochlorococcus marinus (strain MIT 9303), this protein is Large ribosomal subunit protein bL17.